The sequence spans 527 residues: Amine oxidase [flavin-containing] A (527 aa).

The residue at position 1 (Met-1) is an N-acetylmethionine. Residues Met-1–Ser-497 lie on the Cytoplasmic side of the membrane. Ser-383 is modified (phosphoserine). Cys-406 carries the post-translational modification S-8alpha-FAD cysteine. A helical; Anchor for type IV membrane protein transmembrane segment spans residues Val-498 to Leu-518. Residues Tyr-519 to Ser-527 lie on the Mitochondrial intermembrane side of the membrane. The segment at Lys-520–Lys-522 is interaction with membrane phospholipid headgroups.

Belongs to the flavin monoamine oxidase family. As to quaternary structure, monomer, homo- or heterodimer (containing two subunits of similar size). Each subunit contains a covalently bound flavin. Enzymatically active as monomer. FAD is required as a cofactor.

It localises to the mitochondrion outer membrane. The enzyme catalyses a secondary aliphatic amine + O2 + H2O = a primary amine + an aldehyde + H2O2. It catalyses the reaction a primary methyl amine + O2 + H2O = an aldehyde + H2O2 + NH4(+). The catalysed reaction is (R)-adrenaline + O2 + H2O = (R)-3,4-dihydroxymandelaldehyde + methylamine + H2O2. It carries out the reaction dopamine + O2 + H2O = 3,4-dihydroxyphenylacetaldehyde + H2O2 + NH4(+). The enzyme catalyses tyramine + O2 + H2O = (4-hydroxyphenyl)acetaldehyde + H2O2 + NH4(+). It catalyses the reaction (R)-noradrenaline + O2 + H2O = (R)-3,4-dihydroxymandelaldehyde + H2O2 + NH4(+). The catalysed reaction is serotonin + O2 + H2O = (5-hydroxyindol-3-yl)acetaldehyde + H2O2 + NH4(+). It carries out the reaction kynuramine + O2 + H2O = 3-(2-aminophenyl)-3-oxopropanal + H2O2 + NH4(+). The enzyme catalyses tryptamine + O2 + H2O = indole-3-acetaldehyde + H2O2 + NH4(+). It catalyses the reaction 2-phenylethylamine + O2 + H2O = 2-phenylacetaldehyde + H2O2 + NH4(+). Functionally, catalyzes the oxidative deamination of primary and some secondary amine such as neurotransmitters, with concomitant reduction of oxygen to hydrogen peroxide and has important functions in the metabolism of neuroactive and vasoactive amines in the central nervous system and peripheral tissues. Preferentially oxidizes serotonin. Also catalyzes the oxidative deamination of kynuramine to 3-(2-aminophenyl)-3-oxopropanal that can spontaneously condense to 4-hydroxyquinoline. This is Amine oxidase [flavin-containing] A from Pongo abelii (Sumatran orangutan).